Reading from the N-terminus, the 206-residue chain is Imidazoleglycerol-phosphate dehydratase (206 aa).

It belongs to the imidazoleglycerol-phosphate dehydratase family.

The protein resides in the cytoplasm. It catalyses the reaction D-erythro-1-(imidazol-4-yl)glycerol 3-phosphate = 3-(imidazol-4-yl)-2-oxopropyl phosphate + H2O. It functions in the pathway amino-acid biosynthesis; L-histidine biosynthesis; L-histidine from 5-phospho-alpha-D-ribose 1-diphosphate: step 6/9. The protein is Imidazoleglycerol-phosphate dehydratase of Mycolicibacterium smegmatis (strain ATCC 700084 / mc(2)155) (Mycobacterium smegmatis).